We begin with the raw amino-acid sequence, 306 residues long: MGTVVLKLTKEKQETVISDFTRHQVSPPPYARFAARTAGCIVTVYNSGKVMFQGQEAETVAVRYGSPIAKKTVSPASGSLPEGFANWSVVGSDEVGKGDFFGPLVVVAAYVDKTKIELVRELGVRDSKNVSDPEIRTIARDLHAVIPYEYRILHNPDYNRMQRTMTQGKMTALLHNSALNGLLTRLDEPPQAILIDQFAEKAVYYKHLSGETNQVKDNVYFSTKAEGIHVAVAAASILARAIFLKEMDQLSRQTGTEIPKGAGAKVDQVAASLLLRYGPERLQEWTKYHFANTKKAEALAKKRNRP.

The 216-residue stretch at 87 to 302 (WSVVGSDEVG…TKKAEALAKK (216 aa)) folds into the RNase H type-2 domain. The a divalent metal cation site is built by D93, E94, and D196.

This sequence belongs to the RNase HII family. RnhC subfamily. Requires Mn(2+) as cofactor. Mg(2+) serves as cofactor.

It is found in the cytoplasm. It carries out the reaction Endonucleolytic cleavage to 5'-phosphomonoester.. Functionally, endonuclease that specifically degrades the RNA of RNA-DNA hybrids. This Exiguobacterium sibiricum (strain DSM 17290 / CCUG 55495 / CIP 109462 / JCM 13490 / 255-15) protein is Ribonuclease HIII.